Consider the following 190-residue polypeptide: dCTP deaminase, dUMP-forming (190 aa).

Residues 101–106 (KSSLGR), aspartate 119, 127–129 (TLE), glutamine 148, tyrosine 162, and glutamine 174 contribute to the dCTP site. Glutamate 129 acts as the Proton donor/acceptor in catalysis. Positions 161 to 190 (PYGSSGVGSKYQGQRGPTPSRSYQNFIRST) are disordered. A compositionally biased stretch (polar residues) spans 171-190 (YQGQRGPTPSRSYQNFIRST).

Belongs to the dCTP deaminase family. Homotrimer.

The enzyme catalyses dCTP + 2 H2O = dUMP + NH4(+) + diphosphate. The protein operates within pyrimidine metabolism; dUMP biosynthesis; dUMP from dCTP: step 1/1. Its function is as follows. Bifunctional enzyme that catalyzes both the deamination of dCTP to dUTP and the hydrolysis of dUTP to dUMP without releasing the toxic dUTP intermediate. This is dCTP deaminase, dUMP-forming from Mycobacterium marinum (strain ATCC BAA-535 / M).